Consider the following 37-residue polypeptide: Large ribosomal subunit protein bL36 (37 aa).

Belongs to the bacterial ribosomal protein bL36 family.

This chain is Large ribosomal subunit protein bL36, found in Mycobacterium leprae (strain Br4923).